Here is a 1856-residue protein sequence, read N- to C-terminus: MLKAVLKKSREGGKGSKKEAGGDFGSETPALSSSGDSPVNSLSTTEDTYRVSLAKGVSMSLPSSPLLPRQSLLTQSRSNKKSPGPVRKPKYVESPRVPGDPVMIPFGEGSKPSEPSATEAKADNEPSCSPAAQELLTRLGFLLGEGIPSATHITIEDKNEAMCTALSQGISPCSTLTSSTASPSTDSPCSTLNSCVSKTAASKSPCETISSPSSTLESKDSGIIATITSSSENDDRSGSSLEWNRDGSLRLGVQKGVLHDRRADNCSPVAEEETTGSAESVLPKAEPSAGDGPVPYPQSSGSLIMPRPNSVAATSSTKLEDLSYLDGQRNAPLRTSIRLPWHNTAGGRAPEVKARFAPYKPQEILLKPLLFEVPSITTDSVFVGRDWLFHQIEENLRNTELAENRGAVVVGSVGFGKTAIISKLVALSCHGSRMRQIASSSPSLSPKSSDPTQDLPGTPLLSPSSSTSALSVTRTPAGPGTADSQRPREDAVKYLASKVVAYHYCQADNTYTCLVPEFVHSIAALLCRSHQLAAYRDLLIKEPQLQSMLSLRSCVQDPVAAFKRGVLEPLTSLRNEQKIPEEEYIILIDGLNEAEFHKPDYGDTLSSFITKIIPKFPTWLKLIVTVRANFQEIISALPFVKLSLDDFPDNKDIHSDLHAYVQHRVHSSQDILSNISLNGKADAALISKVSSHLVLRSLGSYLYLKLTLDLFQRGHLVIKSASYKVVPVSLSELYLLQCNMKFMTQSAFDRALPILNVALASLHPMTDEQIFQAINAGHIQGEQGWEDFQQRMEALSCFLIKRRDKTRMFCHPSFREWLVWRADGESTAFLCEPRNGHALLAFMFSRQESKLNRQQTMELGHHILKAHIFKGLSKKTGVSSSHLQALWIGYSTEGLSAALASLRNLYTPNVKVSRLLILGGANVNYRTEVLNNAPILCVQSHLGHEEVVTLLLEFGACLDGMSENGMNALCYAAAAGHMKLVCLLIKKGARVDHLDKKGQCALVHSALRGHSDILQYLLNCEWSAGPPQPGTLRKSQALQQALTAAASMGHSSVVQSLLGMAEEHEIEVNGTDTLWGETALTAAAGRGKVEICELLLERGAAVSRANRRGVPPLFCAARQGHWQVVRLLLDRGCDVNLSDKQGRTPLMVASCEGHLSTVEFLLSKGAALSSLDKEGLSALSWACLKGHRAVVQYLVEEGAEIDQTDKNGRTPLDLAAFYGDAETVLYLVEKGAVIEHVDHSGMRPLDRAIGCRNTAVVVTLLRKGAKLGNAAWAMATSKPDILIILLQKLVEEGNVMYKKGKMKEAAQRYQYALRKFPREGLGEDMRPFNELRVSLYLNLSRCRRKTNDFGLAEEFASKALELKPKSYEAFYARARAKRNSRQFLAALADLQEAVKLCPNNQEIKRLLARVEEECKQLQRNQQQKQQGPPPAPANDSDNEEDAPASSLKDHFPIEEAEEEDTSSQEESISPTPRSQPPPSVPSPYIRNLQEGLQSKGRSASPQSRAGISKSLRETVAQSGLVMQPTKQAQIVKTNQHLGSGQSSMRNSSTKIQVSSQNPPPSPMPGRVSAAPAVSRNQHLEGTGPFTAGTGCGHFGDRLGASQSLQLQRSESGTAYPLPSKVKAAERLLAHASVAVDMAPPNQGGPVSCSDVRHPASLSSSGSSGSPSSSIKMSSSTSSLTSSSSVSDGFKVQGPDSRIRDKGTTQVQGGTAEHRPRNTPFMGIMDKTARFQQQSNPPNRSWHCPVAEGLLTNTATAAGLQSNSEKPTLKPGGYCSQAKPCSVPPLSMGVHNGAQVKELEENKCQIPALCQDNRITKGVPHLYPEGVSKQPLHVSTEAHRSHLTSAKPKRSFIESNV.

At Met1 the chain carries N-acetylmethionine. Disordered stretches follow at residues 1–45 (MLKA…LSTT), 58–130 (SMSL…SCSP), 203–222 (KSPCETISSPSSTLESKDSG), 262–296 (RADNCSPVAEEETTGSAESVLPKAEPSAGDGPVPY), and 437–489 (IASS…RPRE). Over residues 8-21 (KSREGGKGSKKEAG) the composition is skewed to basic and acidic residues. The span at 29 to 45 (PALSSSGDSPVNSLSTT) shows a compositional bias: polar residues. 6 positions are modified to phosphoserine: Ser60, Ser63, Ser64, Ser204, Ser267, and Ser462. Over residues 60–77 (SLPSSPLLPRQSLLTQSR) the composition is skewed to low complexity. The segment covering 203–216 (KSPCETISSPSSTL) has biased composition (polar residues). Residues 439–475 (SSSPSLSPKSSDPTQDLPGTPLLSPSSSTSALSVTRT) are compositionally biased toward low complexity. ANK repeat units lie at residues 893-925 (EGLSAALASLRNLYTPNVKVSRLLILGGANVNY), 931-960 (NNAPILCVQSHLGHEEVVTLLLEFGACLDG), 964-993 (NGMNALCYAAAAGHMKLVCLLIKKGARVDH), 997-1026 (KGQCALVHSALRGHSDILQYLLNCEWSAGP), 1037-1066 (ALQQALTAAASMGHSSVVQSLLGMAEEHEI), 1075-1104 (WGETALTAAAGRGKVEICELLLERGAAVSR), 1108-1137 (RGVPPLFCAARQGHWQVVRLLLDRGCDVNL), 1141-1170 (QGRTPLMVASCEGHLSTVEFLLSKGAALSS), 1174-1203 (EGLSALSWACLKGHRAVVQYLVEEGAEIDQ), 1207-1236 (NGRTPLDLAAFYGDAETVLYLVEKGAVIEH), and 1240-1269 (SGMRPLDRAIGCRNTAVVVTLLRKGAKLGN). 3 TPR repeats span residues 1286–1319 (LQKLVEEGNVMYKKGKMKEAAQRYQYALRKFPRE), 1333–1366 (VSLYLNLSRCRRKTNDFGLAEEFASKALELKPKS), and 1368–1400 (EAFYARARAKRNSRQFLAALADLQEAVKLCPNN). Low complexity predominate over residues 1417–1426 (LQRNQQQKQQ). Disordered regions lie at residues 1417 to 1597 (LQRN…FGDR), 1636 to 1720 (DMAP…NTPF), and 1832 to 1856 (HVSTEAHRSHLTSAKPKRSFIESNV). Phosphoserine is present on residues Ser1436 and Ser1463. Residues 1454–1463 (EEAEEEDTSS) show a composition bias toward acidic residues. 2 stretches are compositionally biased toward polar residues: residues 1490–1505 (EGLQSKGRSASPQSRA) and 1524–1556 (PTKQAQIVKTNQHLGSGQSSMRNSSTKIQVSSQ). The segment covering 1656 to 1686 (SLSSSGSSGSPSSSIKMSSSTSSLTSSSSVS) has biased composition (low complexity). Phosphoserine occurs at positions 1665, 1673, and 1674.

It belongs to the TANC family. In terms of assembly, interacts probably directly with DLG1, DLG4, HOMER1. Interacts with DLGAP1, INA, CAMK2A, GRIN2B and GRIA1. Interacts with TNIK and MINK1. In terms of processing, phosphorylated; by MINK1 and TNIK upon stimulation by RAP2A.

Its subcellular location is the postsynaptic density. In terms of biological role, may be a scaffold component in the postsynaptic density. The chain is Protein TANC1 (Tanc1) from Mus musculus (Mouse).